A 24-amino-acid chain; its full sequence is Brevinin-1BYb (24 aa).

The cysteines at positions 18 and 24 are disulfide-linked.

Expressed by the skin glands.

The protein localises to the secreted. Functionally, antibacterial activity against Gram-positive bacterium S.aureus and Gram-negative bacterium E.coli. Has moderate antifungal activity against C.albicans and strong hemolytic activity. The sequence is that of Brevinin-1BYb from Rana boylii (Foothill yellow-legged frog).